A 229-amino-acid polypeptide reads, in one-letter code: UPF0128 protein aq_756 (229 aa).

It belongs to the UPF0128 family.

This Aquifex aeolicus (strain VF5) protein is UPF0128 protein aq_756.